The chain runs to 218 residues: Large ribosomal subunit protein bL25 (218 aa).

The protein belongs to the bacterial ribosomal protein bL25 family. CTC subfamily. As to quaternary structure, part of the 50S ribosomal subunit; part of the 5S rRNA/L5/L18/L25 subcomplex. Contacts the 5S rRNA. Binds to the 5S rRNA independently of L5 and L18.

In terms of biological role, this is one of the proteins that binds to the 5S RNA in the ribosome where it forms part of the central protuberance. This Gluconobacter oxydans (strain 621H) (Gluconobacter suboxydans) protein is Large ribosomal subunit protein bL25.